Consider the following 643-residue polypeptide: MNANPKFLSADARVDAAAVAPLPNSRKVYVTGSQPDIRVPMREITQADTPTSFGGEKNPPIYVYDTSGPYTDPDAKIDIRAGLPALRQRWIDARGDTETLSGLTSDYGRERAADPATAELRFPGLHRHPRRAKAGKNVTQMHYARQGIITPEMEYIAIRENQRRAEYLESLKASGPNGAKLAAMMGRQHAGQAFGAAAFGANAPAEITPEFVRDEVARGRAIIPANINHPETEPMIIGRNFLVKINANIGNSAVTSSIGEEVDKMTWAIRWGGDTVMDLSTGKHIHETREWIIRNSPVPIGTVPIYQALEKVNGKAEDLTWEIFRDTLIEQAEQGVDYFTIHAGVRLQYVPLTANRMTGIVSRGGSIMAKWCLAHHKESFLYEHFEEICEIMKAYDVSFSLGDGLRPGSIYDANDEAQLGELKTLGELTQIAWKHDVQVMIEGPGHVPMQLIKENMDLQLDWCKEAPFYTLGPLTTDIAPGYDHITSGIGAAMIGWFGTAMLCYVTPKEHLGLPNKDDVKEGIITYKLAAHAADLAKGHPGAQVRDNALSKARFEFRWQDQFNLGLDPDKAREFHDETLPKDSAKVAHFCSMCGPHFCSMKITQDVREFAAQQGVSENDALKKGMEVKAVEFVKSGSEIYHRQ.

Residues Asn248, Met277, Tyr306, His342, 362 to 364 (SRG), 403 to 406 (DGLR), and Glu442 contribute to the substrate site. Residue His446 participates in Zn(2+) binding. Residue Tyr469 participates in substrate binding. His510 contributes to the Zn(2+) binding site. Residues Cys590, Cys593, and Cys598 each contribute to the [4Fe-4S] cluster site.

It belongs to the ThiC family. Homodimer. Requires [4Fe-4S] cluster as cofactor.

It catalyses the reaction 5-amino-1-(5-phospho-beta-D-ribosyl)imidazole + S-adenosyl-L-methionine = 4-amino-2-methyl-5-(phosphooxymethyl)pyrimidine + CO + 5'-deoxyadenosine + formate + L-methionine + 3 H(+). It functions in the pathway cofactor biosynthesis; thiamine diphosphate biosynthesis. Catalyzes the synthesis of the hydroxymethylpyrimidine phosphate (HMP-P) moiety of thiamine from aminoimidazole ribotide (AIR) in a radical S-adenosyl-L-methionine (SAM)-dependent reaction. The chain is Phosphomethylpyrimidine synthase from Burkholderia mallei (strain NCTC 10247).